Consider the following 119-residue polypeptide: uncharacterized protein (119 aa).

A coiled-coil region spans residues 6-36 (QAYLDIQGKIAEFRREIKALRVEEKAITANL). The segment at 95–119 (AVTGSSSNVKIRKSAPARNEEDDDG) is disordered.

This is an uncharacterized protein from Frog virus 3 (isolate Goorha) (FV-3).